The chain runs to 166 residues: Dynein regulatory complex protein 8 (166 aa).

An EF-hand domain is found at Asp-95 to Ala-130.

Belongs to the DRC8 family. In terms of assembly, component of the nexin-dynein regulatory complex (N-DRC).

The protein localises to the cytoplasm. It is found in the cytoskeleton. It localises to the flagellum axoneme. Component of the nexin-dynein regulatory complex (N-DRC), a key regulator of ciliary/flagellar motility which maintains the alignment and integrity of the distal axoneme and regulates microtubule sliding in motile axonemes. This Chlamydomonas reinhardtii (Chlamydomonas smithii) protein is Dynein regulatory complex protein 8.